Here is a 174-residue protein sequence, read N- to C-terminus: ATP synthase subunit delta, sodium ion specific (174 aa).

It belongs to the ATPase delta chain family. In terms of assembly, F-type ATPases have 2 components, F(1) - the catalytic core - and F(0) - the membrane proton channel. F(1) has five subunits: alpha(3), beta(3), gamma(1), delta(1), epsilon(1). F(0) has three main subunits: a(1), b(2) and c(10-14). The alpha and beta chains form an alternating ring which encloses part of the gamma chain. F(1) is attached to F(0) by a central stalk formed by the gamma and epsilon chains, while a peripheral stalk is formed by the delta and b chains.

The protein localises to the cell inner membrane. In terms of biological role, f(1)F(0) ATP synthase produces ATP from ADP in the presence of a proton or sodium gradient. F-type ATPases consist of two structural domains, F(1) containing the extramembraneous catalytic core and F(0) containing the membrane proton channel, linked together by a central stalk and a peripheral stalk. During catalysis, ATP synthesis in the catalytic domain of F(1) is coupled via a rotary mechanism of the central stalk subunits to proton translocation. Its function is as follows. This protein is part of the stalk that links CF(0) to CF(1). It either transmits conformational changes from CF(0) to CF(1) or is implicated in proton conduction. In Ilyobacter tartaricus, this protein is ATP synthase subunit delta, sodium ion specific.